The primary structure comprises 258 residues: Type III pantothenate kinase (258 aa).

6 to 13 (DVGNTNIV) is a binding site for ATP. Residues Tyr-100 and 107-110 (GADR) contribute to the substrate site. Asp-109 acts as the Proton acceptor in catalysis. Asp-129 is a K(+) binding site. Thr-132 serves as a coordination point for ATP. Thr-184 provides a ligand contact to substrate.

Belongs to the type III pantothenate kinase family. As to quaternary structure, homodimer. It depends on NH4(+) as a cofactor. The cofactor is K(+).

Its subcellular location is the cytoplasm. It catalyses the reaction (R)-pantothenate + ATP = (R)-4'-phosphopantothenate + ADP + H(+). Its pathway is cofactor biosynthesis; coenzyme A biosynthesis; CoA from (R)-pantothenate: step 1/5. In terms of biological role, catalyzes the phosphorylation of pantothenate (Pan), the first step in CoA biosynthesis. The protein is Type III pantothenate kinase of Clostridium botulinum (strain Kyoto / Type A2).